The chain runs to 337 residues: 2-oxoglutarate receptor 1 (337 aa).

Over Met-1–Val-38 the chain is Extracellular. The N-linked (GlcNAc...) asparagine glycan is linked to Asn-23. Residues Ile-39–Ile-59 traverse the membrane as a helical segment. Residues Phe-60–Thr-69 are Cytoplasmic-facing. A helical transmembrane segment spans residues Val-70 to Ile-90. Over His-91–Asn-116 the chain is Extracellular. A disulfide bridge links Cys-106 with Cys-183. The helical transmembrane segment at Leu-117–His-137 threads the bilayer. At Pro-138–Val-151 the chain is on the cytoplasmic side. A helical transmembrane segment spans residues Val-152–Ile-172. The Extracellular segment spans residues Thr-173–Leu-200. The helical transmembrane segment at Ile-201–Ile-221 threads the bilayer. Residues Ile-222–Leu-242 are Cytoplasmic-facing. The chain crosses the membrane as a helical span at residues Thr-243 to Ile-263. Residues Arg-264 to Tyr-284 lie on the Extracellular side of the membrane. The chain crosses the membrane as a helical span at residues Ile-285–Val-305. The Cytoplasmic portion of the chain corresponds to Ser-306–Pro-337.

This sequence belongs to the G-protein coupled receptor 1 family. Predominantly expressed in the kidney with limited expression in the testis and the smooth muscle. Expressed in SLC26A4/pendrin-positive type B and non-A non-B intercalated cells (at protein level).

The protein localises to the cell membrane. In terms of biological role, g protein-coupled receptor for dicarboxylates and amino dicarboxylates. Receptor for itaconate produced by activated macrophages upon bacterial infection. In the respiratory epithelium, couples the binding of itaconate to the activation of GNA11 and downstream intracellular Ca(2+) release, leading to mucocilliary clearance of airborne pathogens. Receptor for leukotriene E4 (LTE4) produced by mast cells upon allergic inflammation. Binds with high affinity to LTE4 and elicits mucin release from pulmonary epithelium in response to airborne fungi allergens. Regulates mucin-producing goblet cell homeostasis. Receptor for alpha-ketoglutarate produced by proximal tubule renal cells upon metabolic alkalosis. In an intrarenal paracrine signaling pathway, binds alpha-ketoglutarate and drives transepithelial salt reabsorption and bicarbonate secretion by SLC26A4/pendrin-positive intercalated cells. This chain is 2-oxoglutarate receptor 1 (Oxgr1), found in Mus musculus (Mouse).